The chain runs to 257 residues: Homeobox protein goosecoid (257 aa).

Positions 160–219 (KRRHRTIFTDEQLEALENLFQETKYPDVGTREQLARKVHLREEKVEVWFKNRRAKWRRQK) form a DNA-binding region, homeobox. The interval 213–257 (AKWRRQKRSSSEESENAEKWNKTSSSKASPEKREEEGKSDLDSDS) is disordered. Over residues 241–257 (SPEKREEEGKSDLDSDS) the composition is skewed to basic and acidic residues.

Belongs to the paired homeobox family. Bicoid subfamily.

The protein localises to the nucleus. Regulates chordin (CHRD). May play a role in spatial programing within discrete embryonic fields or lineage compartments during organogenesis. In concert with NKX3-2, plays a role in defining the structural components of the middle ear; required for the development of the entire tympanic ring. Probably involved in the regulatory networks that define neural crest cell fate specification and determine mesoderm cell lineages in mammals. This Pongo pygmaeus (Bornean orangutan) protein is Homeobox protein goosecoid (GSC).